A 265-amino-acid polypeptide reads, in one-letter code: Shikimate dehydrogenase (NADP(+)) (265 aa).

Shikimate is bound by residues 15 to 17 (SKS) and T62. Catalysis depends on K66, which acts as the Proton acceptor. N87 and D102 together coordinate shikimate. Residues 127-131 (GAGGA), 151-156 (NRTVSR), and M212 each bind NADP(+). Y214 provides a ligand contact to shikimate. G234 contributes to the NADP(+) binding site.

This sequence belongs to the shikimate dehydrogenase family. In terms of assembly, homodimer.

It carries out the reaction shikimate + NADP(+) = 3-dehydroshikimate + NADPH + H(+). It participates in metabolic intermediate biosynthesis; chorismate biosynthesis; chorismate from D-erythrose 4-phosphate and phosphoenolpyruvate: step 4/7. In terms of biological role, involved in the biosynthesis of the chorismate, which leads to the biosynthesis of aromatic amino acids. Catalyzes the reversible NADPH linked reduction of 3-dehydroshikimate (DHSA) to yield shikimate (SA). This chain is Shikimate dehydrogenase (NADP(+)), found in Thiobacillus denitrificans (strain ATCC 25259 / T1).